Reading from the N-terminus, the 60-residue chain is Large ribosomal subunit protein bL32 (60 aa).

2 disordered regions span residues 1–28 (MAVQQNKKSPSKRGMHRSHNALALPGIA) and 41–60 (HISPNGFYRGRQVLKPKSEA). Residues 9–19 (SPSKRGMHRSH) show a composition bias toward basic residues.

Belongs to the bacterial ribosomal protein bL32 family.

The sequence is that of Large ribosomal subunit protein bL32 from Verminephrobacter eiseniae (strain EF01-2).